The sequence spans 594 residues: P-granule-associated novel protein 1 (594 aa).

The signal sequence occupies residues 1–18 (MRSLLSFVLLALARIAIS). The Extracellular portion of the chain corresponds to 19–513 (EETKSCIDIE…PEEEEVYRSG (495 aa)). 15 LRR repeats span residues 78-101 (GTEL…LFEN), 103-124 (FAKQ…SFQS), 125-149 (LGGS…LFTG), 150-173 (LKSL…AFEE), 175-197 (KKVE…TFDG), 198-221 (MKNL…AFRG), 222-245 (LNSL…IFSA), 246-269 (LKNL…SFPK), 271-290 (EKLV…KLKD), 291-315 (LPSL…MFGL), 318-341 (SDRI…AFQH), 343-365 (PNLI…SPSQ), 374-397 (LKKL…ELPK), 399-419 (LSSL…ALEG), and 420-442 (MEIK…TFDS). A helical transmembrane segment spans residues 514 to 534 (WITVAATILTIVTIVIMVIIA). Over 535-594 (MLYFKDARYQFPLRGRRSDSDLHKLIENDPLNIASDSILVVPAMPKRNTGPKKTVRFQNF) the chain is Cytoplasmic.

In terms of assembly, interacts with glh-1. Interacts (via LRR regions) with myrf-1 (via C-terminus); the interaction promotes the role of myrf-1 in the synaptic remodeling of DD GABAergic motor neurons at the cell membrane. As to expression, expressed in the germline and somatic cells. Expressed in the germline and somatic cells. Expressed at higher levels in germline cells relative to somatic cells. In terms of tissue distribution, expressed in germline cells. As to expression, highly expressed in the pharynx and at lower levels in the intestine, but not detected in other tissues. Other studies suggest a broader expression pattern in somatic tissues: from embryogenesis to adult stages, expressed strongly in body wall muscle, vulva, somatic gonad and pharynx, at lower levels in the nerve ring, hypodermis, and rectal epithelia, and very weakly in the intestine.

Its subcellular location is the cytoplasm. It localises to the apical cell membrane. Functionally, regulates diverse developmental processes including larval molting and gonad maturation. Promotes the localization of myrf-1 and myrf-2 to the cell membrane. In association with myrf-1, promotes the synaptic remodeling of DD GABAergic motor neurons whereby new synapses form in the dorsal processes of DD neurons. The sequence is that of P-granule-associated novel protein 1 from Caenorhabditis elegans.